Reading from the N-terminus, the 809-residue chain is ATP-dependent RNA helicase HrpB (809 aa).

Residues Leu-14–Glu-177 form the Helicase ATP-binding domain. Ala-27–Ser-34 is a binding site for ATP. A DEFH box motif is present at residues Asp-123 to His-126. The Helicase C-terminal domain occupies Arg-195 to Gly-368. The tract at residues Pro-788 to Ser-809 is disordered.

This sequence belongs to the DEAD box helicase family.

It carries out the reaction ATP + H2O = ADP + phosphate + H(+). This is ATP-dependent RNA helicase HrpB (hrpB) from Escherichia coli (strain K12).